Consider the following 1028-residue polypeptide: Receptor-type guanylate cyclase gcy-13 (1028 aa).

N-linked (GlcNAc...) asparagine glycosylation is found at Asn-58, Asn-156, Asn-324, Asn-337, Asn-377, and Asn-394. The chain crosses the membrane as a helical span at residues 438 to 458 (IVVIVAVIIVLCCAAAAIAAF). Residues 459–1028 (LVIKARRDEE…WLLGMKEESA (570 aa)) are Cytoplasmic-facing. The interval 491–511 (ESHHSSRSLQSNSTTTTGTTG) is disordered. Over residues 497–511 (RSLQSNSTTTTGTTG) the composition is skewed to low complexity. One can recognise a Protein kinase domain in the interval 499-770 (LQSNSTTTTG…DMVNKLMKNM (272 aa)). Residues 786 to 817 (SVLEKHASSLEDEVQERMKELVEEKKKSDILL) are a coiled coil. One can recognise a Guanylate cyclase domain in the interval 844–974 (TIFFSDVVGF…DTVNTASRME (131 aa)).

The protein belongs to the adenylyl cyclase class-4/guanylyl cyclase family. In terms of tissue distribution, expressed bilaterally in RIM interneurons.

The protein localises to the cell membrane. The catalysed reaction is GTP = 3',5'-cyclic GMP + diphosphate. In terms of biological role, guanylate cyclase involved in the production of the second messenger cGMP. This Caenorhabditis elegans protein is Receptor-type guanylate cyclase gcy-13.